Reading from the N-terminus, the 492-residue chain is Ketol-acid reductoisomerase (NADP(+)) (492 aa).

In terms of domain architecture, KARI N-terminal Rossmann spans 17–208; sequence LGQCRLMKKN…GSNKAGVLES (192 aa). NADP(+) contacts are provided by residues 45-48, R68, S76, and S78; that span reads CGSQ. H132 is a catalytic residue. An NADP(+)-binding site is contributed by G158. KARI C-terminal knotted domains lie at 209–344 and 345–487; these read SFVA…KAPV and YCET…MKDM. Positions 217, 221, 389, and 393 each coordinate Mg(2+). S414 contacts substrate.

It belongs to the ketol-acid reductoisomerase family. Mg(2+) is required as a cofactor.

The catalysed reaction is (2R)-2,3-dihydroxy-3-methylbutanoate + NADP(+) = (2S)-2-acetolactate + NADPH + H(+). The enzyme catalyses (2R,3R)-2,3-dihydroxy-3-methylpentanoate + NADP(+) = (S)-2-ethyl-2-hydroxy-3-oxobutanoate + NADPH + H(+). The protein operates within amino-acid biosynthesis; L-isoleucine biosynthesis; L-isoleucine from 2-oxobutanoate: step 2/4. Its pathway is amino-acid biosynthesis; L-valine biosynthesis; L-valine from pyruvate: step 2/4. In terms of biological role, involved in the biosynthesis of branched-chain amino acids (BCAA). Catalyzes an alkyl-migration followed by a ketol-acid reduction of (S)-2-acetolactate (S2AL) to yield (R)-2,3-dihydroxy-isovalerate. In the isomerase reaction, S2AL is rearranged via a Mg-dependent methyl migration to produce 3-hydroxy-3-methyl-2-ketobutyrate (HMKB). In the reductase reaction, this 2-ketoacid undergoes a metal-dependent reduction by NADPH to yield (R)-2,3-dihydroxy-isovalerate. In Blochmanniella floridana, this protein is Ketol-acid reductoisomerase (NADP(+)).